Here is a 467-residue protein sequence, read N- to C-terminus: Ethanolamine-phosphate phospho-lyase homolog 1 (467 aa).

Residue Lys307 is modified to N6-(pyridoxal phosphate)lysine.

Belongs to the class-III pyridoxal-phosphate-dependent aminotransferase family. Pyridoxal 5'-phosphate serves as cofactor.

This chain is Ethanolamine-phosphate phospho-lyase homolog 1, found in Caenorhabditis elegans.